Reading from the N-terminus, the 397-residue chain is Enoyl-[acyl-carrier-protein] reductase [NADH] (397 aa).

NAD(+) contacts are provided by residues 47–52 (GASTGY), 73–74 (LE), 110–111 (DA), and 138–139 (LA). Y224 lines the substrate pocket. Catalysis depends on Y234, which acts as the Proton donor. Residues K243 and 272-274 (LVT) each bind NAD(+).

Belongs to the TER reductase family. Monomer.

It carries out the reaction a 2,3-saturated acyl-[ACP] + NAD(+) = a (2E)-enoyl-[ACP] + NADH + H(+). The protein operates within lipid metabolism; fatty acid biosynthesis. Its function is as follows. Involved in the final reduction of the elongation cycle of fatty acid synthesis (FAS II). Catalyzes the reduction of a carbon-carbon double bond in an enoyl moiety that is covalently linked to an acyl carrier protein (ACP). The polypeptide is Enoyl-[acyl-carrier-protein] reductase [NADH] (Methylobacillus flagellatus (strain ATCC 51484 / DSM 6875 / VKM B-1610 / KT)).